The sequence spans 483 residues: Malonate-semialdehyde dehydrogenase 2 (483 aa).

NAD(+) contacts are provided by phenylalanine 152, lysine 176, glutamate 179, arginine 180, and serine 229. Cysteine 284 acts as the Nucleophile in catalysis. Residue glutamate 384 coordinates NAD(+).

Belongs to the aldehyde dehydrogenase family. IolA subfamily. Homotetramer.

The catalysed reaction is 3-oxopropanoate + NAD(+) + CoA + H2O = hydrogencarbonate + acetyl-CoA + NADH + H(+). It carries out the reaction 2-methyl-3-oxopropanoate + NAD(+) + CoA + H2O = propanoyl-CoA + hydrogencarbonate + NADH + H(+). The protein operates within polyol metabolism; myo-inositol degradation into acetyl-CoA; acetyl-CoA from myo-inositol: step 7/7. Its function is as follows. Catalyzes the oxidation of malonate semialdehyde (MSA) and methylmalonate semialdehyde (MMSA) into acetyl-CoA and propanoyl-CoA, respectively. Is involved in a myo-inositol catabolic pathway. Bicarbonate, and not CO2, is the end-product of the enzymatic reaction. The sequence is that of Malonate-semialdehyde dehydrogenase 2 from Geobacillus thermodenitrificans (strain NG80-2).